Consider the following 367-residue polypeptide: VDFNVPIKEGKVKNTTRIQGAIPTLKKILEQNPKNVTLMSHMGRPDGKRVEKDSLKIVVPKLEELLGTKVNFVNDCVGSEALEASNAGNGQINLLENLRFHIQEEGKGLDANGAKIKADKESVKKFRKELSSLGDIYVNDAFGTAHRAHSSMVGIDHKIRVAGYLMKKELDYFAKALETPQRPFLVILGGAKVADKIQLIKSMLDKVDEMIIGGGMAFTFLKKYIMFPIGKSLFDEEGYKIVDEIIAKAKEKNVKIHLPTDFVCGTGLDASSPVALHDLKSGIPDGWLGLDAGQLTQRENADAIGRAKTIVWNGPQGAFEIEQFKNGSVSMLNALVKQTQNGATTIVGGGDTVNLVGANKANDKLSH.

The (2R)-3-phosphoglycerate site is built by valine 1, aspartate 2, phenylalanine 3, asparagine 4, arginine 17, serine 40, histidine 41, glycine 43, arginine 44, leucine 98, arginine 99, histidine 146, and arginine 147. Glycine 190 is a binding site for ADP. Position 190 (glycine 190) interacts with CDP. AMP-binding residues include alanine 191 and lysine 192. Position 191 (alanine 191) interacts with ATP. A Mg(2+)-binding site is contributed by alanine 191. Residues alanine 194 and aspartate 195 each coordinate Mg(2+). Aspartate 195 contacts CDP. Lysine 196 provides a ligand contact to AMP. Lysine 196 contributes to the ATP binding site. An ADP-binding site is contributed by glycine 214. Glycine 214 provides a ligand contact to CDP. AMP is bound by residues glycine 215 and glycine 289. The ATP site is built by glycine 215 and glycine 289. 2 residues coordinate CDP: glycine 314 and phenylalanine 319. An ADP-binding site is contributed by phenylalanine 319. Position 320 (glutamate 320) interacts with AMP. The ATP site is built by glutamate 320, aspartate 351, and threonine 352. Aspartate 351 serves as a coordination point for Mg(2+).

This sequence belongs to the phosphoglycerate kinase family. Monomer. Requires Mg(2+) as cofactor.

It catalyses the reaction (2R)-3-phosphoglycerate + ATP = (2R)-3-phospho-glyceroyl phosphate + ADP. It functions in the pathway carbohydrate degradation; glycolysis; pyruvate from D-glyceraldehyde 3-phosphate: step 2/5. This Paramecium primaurelia protein is Phosphoglycerate kinase (PGK).